Reading from the N-terminus, the 240-residue chain is Probable transcriptional regulatory protein BLi02909/BL01150 (240 aa).

Positions 1-14 (MAGHSKWKNIQRRK) are enriched in basic residues. Residues 1–21 (MAGHSKWKNIQRRKNAQDAKR) form a disordered region.

Belongs to the TACO1 family.

It localises to the cytoplasm. The chain is Probable transcriptional regulatory protein BLi02909/BL01150 from Bacillus licheniformis (strain ATCC 14580 / DSM 13 / JCM 2505 / CCUG 7422 / NBRC 12200 / NCIMB 9375 / NCTC 10341 / NRRL NRS-1264 / Gibson 46).